The chain runs to 414 residues: Na(+)/H(+) antiporter NhaA (414 aa).

The next 11 membrane-spanning stretches (helical) occupy residues 22 to 42 (VGGF…NSPF), 61 to 81 (LHLT…FFVV), 101 to 121 (MLPI…YAAF), 131 to 151 (GWGI…AVVG), 171 to 191 (LGAI…LPLI), 215 to 235 (SAAL…WALV), 239 to 259 (GVHA…VPLA), 281 to 301 (VLPV…LGAV), 308 to 328 (LGII…GSWV), 343 to 363 (WIDI…SLLI), and 379 to 399 (KAGV…VLAV).

It belongs to the NhaA Na(+)/H(+) (TC 2.A.33) antiporter family.

It localises to the cell membrane. It carries out the reaction Na(+)(in) + 2 H(+)(out) = Na(+)(out) + 2 H(+)(in). In terms of biological role, na(+)/H(+) antiporter that extrudes sodium in exchange for external protons. This Thermobifida fusca (strain YX) protein is Na(+)/H(+) antiporter NhaA.